A 264-amino-acid chain; its full sequence is Thymidylate synthase (264 aa).

Arg21 is a binding site for dUMP. Residue His51 participates in (6R)-5,10-methylene-5,6,7,8-tetrahydrofolate binding. Residue 126-127 (RR) coordinates dUMP. The active-site Nucleophile is the Cys146. Residues 166-169 (RSAD), Asn177, and 207-209 (HIY) contribute to the dUMP site. Residue Asp169 participates in (6R)-5,10-methylene-5,6,7,8-tetrahydrofolate binding. Ala263 serves as a coordination point for (6R)-5,10-methylene-5,6,7,8-tetrahydrofolate.

It belongs to the thymidylate synthase family. Bacterial-type ThyA subfamily. As to quaternary structure, homodimer.

The protein localises to the cytoplasm. The catalysed reaction is dUMP + (6R)-5,10-methylene-5,6,7,8-tetrahydrofolate = 7,8-dihydrofolate + dTMP. It participates in pyrimidine metabolism; dTTP biosynthesis. Catalyzes the reductive methylation of 2'-deoxyuridine-5'-monophosphate (dUMP) to 2'-deoxythymidine-5'-monophosphate (dTMP) while utilizing 5,10-methylenetetrahydrofolate (mTHF) as the methyl donor and reductant in the reaction, yielding dihydrofolate (DHF) as a by-product. This enzymatic reaction provides an intracellular de novo source of dTMP, an essential precursor for DNA biosynthesis. The sequence is that of Thymidylate synthase from Ruthia magnifica subsp. Calyptogena magnifica.